We begin with the raw amino-acid sequence, 900 residues long: Nitrate reductase [NADH] (900 aa).

Residue cysteine 172 coordinates Mo-molybdopterin. The Cytochrome b5 heme-binding domain maps to 521–596; that stretch reads TKMYSLSEVK…LEDYRVGELI (76 aa). Positions 556 and 579 each coordinate heme. The region spanning 644–756 is the FAD-binding FR-type domain; sequence REKIPCKLIS…KGPLGHIEYT (113 aa). FAD contacts are provided by residues 696 to 699, 713 to 717, phenylalanine 718, phenylalanine 725, 730 to 732, and threonine 783; these read RAYT, VVKVY, and AMS.

The protein belongs to the nitrate reductase family. As to quaternary structure, homodimer. The cofactor is FAD. Heme is required as a cofactor. It depends on Mo-molybdopterin as a cofactor.

The enzyme catalyses nitrite + NAD(+) + H2O = nitrate + NADH + H(+). Its function is as follows. Nitrate reductase is a key enzyme involved in the first step of nitrate assimilation in plants, fungi and bacteria. This chain is Nitrate reductase [NADH] (NIA), found in Lotus japonicus (Lotus corniculatus var. japonicus).